Reading from the N-terminus, the 1588-residue chain is Pentafunctional AROM polypeptide (1588 aa).

The 3-dehydroquinate synthase stretch occupies residues 1–392 (MVQLAKVPIL…YGDSAQFVSD (392 aa)). NAD(+)-binding positions include 43-45 (DTN), 78-81 (ETSK), 109-111 (GGV), and Asp-114. Arg-125 lines the 7-phospho-2-dehydro-3-deoxy-D-arabino-heptonate pocket. 134–135 (TS) serves as a coordination point for NAD(+). 7-phospho-2-dehydro-3-deoxy-D-arabino-heptonate is bound by residues Asp-141 and Lys-147. NAD(+) is bound at residue Lys-156. A 7-phospho-2-dehydro-3-deoxy-D-arabino-heptonate-binding site is contributed by Asn-157. NAD(+) is bound by residues 174 to 177 (WLET) and Asn-185. Residue Glu-189 participates in Zn(2+) binding. 7-phospho-2-dehydro-3-deoxy-D-arabino-heptonate is bound by residues 189–192 (EVIK) and Lys-258. Residue Glu-268 is the Proton acceptor; for 3-dehydroquinate synthase activity of the active site. Residues 272-276 (RNLLN) and His-279 contribute to the 7-phospho-2-dehydro-3-deoxy-D-arabino-heptonate site. Residue His-279 participates in Zn(2+) binding. His-283 serves as the catalytic Proton acceptor; for 3-dehydroquinate synthase activity. 7-phospho-2-dehydro-3-deoxy-D-arabino-heptonate-binding residues include His-295 and Lys-364. Position 295 (His-295) interacts with Zn(2+). Positions 405-871 (VYPFKDIPAD…WDVLHSELGA (467 aa)) are EPSP synthase. Cys-853 functions as the For EPSP synthase activity in the catalytic mechanism. The tract at residues 890-1080 (SVVIIGMRAA…IPSGRSAFVC (191 aa)) is shikimate kinase. 895 to 902 (GMRAAGKT) is an ATP binding site. The 3-dehydroquinase stretch occupies residues 1081–1293 (LTFDDLTEQT…AAPGQLTVAQ (213 aa)). Residue His-1198 is the Proton acceptor; for 3-dehydroquinate dehydratase activity of the active site. Residue Lys-1227 is the Schiff-base intermediate with substrate; for 3-dehydroquinate dehydratase activity of the active site. Positions 1306–1588 (PKELFVVGKP…KAIFDAVTKE (283 aa)) are shikimate dehydrogenase.

In the N-terminal section; belongs to the sugar phosphate cyclases superfamily. Dehydroquinate synthase family. The protein in the 2nd section; belongs to the EPSP synthase family. It in the 3rd section; belongs to the shikimate kinase family. This sequence in the 4th section; belongs to the type-I 3-dehydroquinase family. In the C-terminal section; belongs to the shikimate dehydrogenase family. Homodimer. Requires Zn(2+) as cofactor.

The protein localises to the cytoplasm. The enzyme catalyses 7-phospho-2-dehydro-3-deoxy-D-arabino-heptonate = 3-dehydroquinate + phosphate. The catalysed reaction is 3-dehydroquinate = 3-dehydroshikimate + H2O. It catalyses the reaction shikimate + NADP(+) = 3-dehydroshikimate + NADPH + H(+). It carries out the reaction shikimate + ATP = 3-phosphoshikimate + ADP + H(+). The enzyme catalyses 3-phosphoshikimate + phosphoenolpyruvate = 5-O-(1-carboxyvinyl)-3-phosphoshikimate + phosphate. It participates in metabolic intermediate biosynthesis; chorismate biosynthesis; chorismate from D-erythrose 4-phosphate and phosphoenolpyruvate: step 2/7. The protein operates within metabolic intermediate biosynthesis; chorismate biosynthesis; chorismate from D-erythrose 4-phosphate and phosphoenolpyruvate: step 3/7. Its pathway is metabolic intermediate biosynthesis; chorismate biosynthesis; chorismate from D-erythrose 4-phosphate and phosphoenolpyruvate: step 4/7. It functions in the pathway metabolic intermediate biosynthesis; chorismate biosynthesis; chorismate from D-erythrose 4-phosphate and phosphoenolpyruvate: step 5/7. It participates in metabolic intermediate biosynthesis; chorismate biosynthesis; chorismate from D-erythrose 4-phosphate and phosphoenolpyruvate: step 6/7. Its function is as follows. The AROM polypeptide catalyzes 5 consecutive enzymatic reactions in prechorismate polyaromatic amino acid biosynthesis. This Saccharomyces cerevisiae (strain JAY291) (Baker's yeast) protein is Pentafunctional AROM polypeptide.